Consider the following 329-residue polypeptide: MDQLQKAKINQTQKAIVEIKNSFQKHFAKNLNLSRVTAPLFVEGQSGLNDHLDHKQKAVSFYAKKLDKTLEIVQSLAKWKRLALLDYGFSLYEGLYTDMNAIRADDDIDEIHSIYVDQWDWEILINNQDCNLDFLKSIVNKIYSTIRIVQLEIDQLYNPKQIILPDSITFISSQELEDLYPHLSPSRREYEFAKIHKAIFIYQIGYPLKSGYIQSIRSPEYDNWNLNGDLIVYHKLNDQAIELSSMGIRVSKQDFIKQTNFANLKNDQENNFYHQMILNNQLPQTIGGGIGQSRLCMFLLNKKHIGEVQVSVWPNEYKDELLKKGIKLL.

This sequence belongs to the class-II aminoacyl-tRNA synthetase family. AsnA subfamily.

The protein localises to the cytoplasm. It catalyses the reaction L-aspartate + NH4(+) + ATP = L-asparagine + AMP + diphosphate + H(+). Its pathway is amino-acid biosynthesis; L-asparagine biosynthesis; L-asparagine from L-aspartate (ammonia route): step 1/1. The sequence is that of Aspartate--ammonia ligase from Ureaplasma parvum serovar 3 (strain ATCC 27815 / 27 / NCTC 11736).